We begin with the raw amino-acid sequence, 444 residues long: Cholecystokinin receptor type A (444 aa).

Topologically, residues 1 to 56 are extracellular; that stretch reads MSHSPARQHLVESSRMDVVDSLLMNGSNITPPCELGLENETLFCLDQPQPSKEWQS. Asn-25 and Asn-39 each carry an N-linked (GlcNAc...) asparagine glycan. A disulfide bridge links Cys-33 with Cys-44. The helical transmembrane segment at 57–82 threads the bilayer; that stretch reads ALQILLYSIIFLLSVLGNTLVITVLI. The Cytoplasmic segment spans residues 83–92; that stretch reads RNKRMRTVTN. A helical membrane pass occupies residues 93–119; the sequence is IFLLSLAVSDLMLCLFCMPFNLIPNLL. The Extracellular segment spans residues 120 to 130; it reads KDFIFGSAVCK. Cys-129 and Cys-211 are joined by a disulfide. Residues 131–152 traverse the membrane as a helical segment; sequence TTTYFMGTSVSVSTFNLVAISL. The Cytoplasmic portion of the chain corresponds to 153 to 172; sequence ERYGAICRPLQSRVWQTKSH. The chain crosses the membrane as a helical span at residues 173–193; that stretch reads ALKVIAATWCLSFTIMTPYPI. The Extracellular segment spans residues 194–225; it reads YSNLVPFTKNNNQTANMCRFLLPSDAMQQSWQ. A glycan (N-linked (GlcNAc...) asparagine) is linked at Asn-205. A helical transmembrane segment spans residues 226–249; sequence TFLLLILFLLPGIVMVVAYGLISL. Over 250–329 the chain is Cytoplasmic; it reads ELYQGIKFDA…NLIAKKRVIR (80 aa). Positions 263–288 are disordered; that stretch reads KSAKEKKPSTGSSTRYEDSDGCYLQK. The helical transmembrane segment at 330–350 threads the bilayer; sequence MLIVIVVLFFLCWMPIFSANA. Topologically, residues 351 to 365 are extracellular; the sequence is WRAYDTVSAEKHLSG. Residues 366–389 traverse the membrane as a helical segment; sequence TPISFILLLSYTSSCVNPIIYCFM. The Cytoplasmic portion of the chain corresponds to 390 to 444; the sequence is NKRFRLGFMATFPCCPNPGPPGVRGEVGEEEDGRTIRALLSRYSYSHMSTSAPPP. Cys-403 carries the S-palmitoyl cysteine lipid modification.

It belongs to the G-protein coupled receptor 1 family. As to expression, pancreas and brain. Also expressed in the gastrointestinal system and vagus nerve.

The protein resides in the cell membrane. Receptor for cholecystokinin. Mediates pancreatic growth and enzyme secretion, smooth muscle contraction of the gall bladder and stomach. Has a 1000-fold higher affinity for CCK rather than for gastrin. It modulates feeding and dopamine-induced behavior in the central and peripheral nervous system. This receptor mediates its action by association with G proteins that activate a phosphatidylinositol-calcium second messenger system. The protein is Cholecystokinin receptor type A (Cckar) of Rattus norvegicus (Rat).